Consider the following 189-residue polypeptide: Chitin synthase 2 (189 aa).

The protein belongs to the chitin synthase family. Class II subfamily.

The protein resides in the cell membrane. The enzyme catalyses [(1-&gt;4)-N-acetyl-beta-D-glucosaminyl](n) + UDP-N-acetyl-alpha-D-glucosamine = [(1-&gt;4)-N-acetyl-beta-D-glucosaminyl](n+1) + UDP + H(+). Polymerizes chitin, a structural polymer of the cell wall and septum, by transferring the sugar moiety of UDP-GlcNAc to the non-reducing end of the growing chitin polymer. This chain is Chitin synthase 2 (chs2), found in Aspergillus niger.